The following is a 149-amino-acid chain: CyanoQ (149 aa).

The signal sequence occupies residues 1–21 (MSRLRSLLSLILVLVTTVLVS). C22 carries the N-palmitoyl cysteine lipid modification. C22 is lipidated: S-diacylglycerol cysteine.

This sequence belongs to the PsbQ family. CyanoQ subfamily. In terms of assembly, PSII is composed of 1 copy each of membrane proteins PsbA, PsbB, PsbC, PsbD, PsbE, PsbF, PsbH, PsbI, PsbJ, PsbK, PsbL, PsbM, PsbT, PsbX, PsbY, PsbZ, Psb30/Ycf12, peripheral proteins PsbO, CyanoQ (PsbQ), PsbU, PsbV and a large number of cofactors. It forms dimeric complexes. Pull-down experiments with His-tagged PsbQ pull down dimeric, but not monomeric, PSII. Post-translationally, the N-terminus is blocked. Upon expression in E.coli the N-terminus is modified with a diacylglycerol and an acyl group bound to two palmitates and one palmitoleate.

It is found in the cellular thylakoid membrane. In terms of biological role, one of the extrinsic, lumenal subunits of photosystem II (PSII), which stabilize and protect the oxygen-evolving complex. PSII is a light-driven water plastoquinone oxidoreductase, using light energy to abstract electrons from H(2)O, generating a proton gradient subsequently used for ATP formation. Plays a role in the stability of the oxygen-evolving center on the luminal side of PSII. Required for optimal photoautotrophic growth in the absence of Ca(2+) or Cl(-), functions in optimizing PSII water oxidation/O(2) evolving activity. Requires PsbO to bind to PSII. This Synechocystis sp. (strain ATCC 27184 / PCC 6803 / Kazusa) protein is CyanoQ.